A 511-amino-acid polypeptide reads, in one-letter code: V-type proton ATPase subunit B, brain isoform (511 aa).

Position 400 (R400) interacts with ATP.

This sequence belongs to the ATPase alpha/beta chains family. V-ATPase is a heteromultimeric enzyme made up of two complexes: the ATP-hydrolytic V1 complex and the proton translocation V0 complex. The V1 complex consists of three catalytic AB heterodimers that form a heterohexamer, three peripheral stalks each consisting of EG heterodimers, one central rotor including subunits D and F, and the regulatory subunits C and H. The proton translocation complex V0 consists of the proton transport subunit a, a ring of proteolipid subunits c9c'', rotary subunit d, subunits e and f, and the accessory subunits ATP6AP1/Ac45 and ATP6AP2/PRR. Expressed in brain (at protein level). Expressed in all tissues tested, but highest in brain and in adrenal medulla.

It localises to the apical cell membrane. The protein localises to the melanosome. It is found in the cytoplasm. The protein resides in the cytoplasmic vesicle. Its subcellular location is the clathrin-coated vesicle membrane. It localises to the secretory vesicle. The protein localises to the synaptic vesicle membrane. Non-catalytic subunit of the V1 complex of vacuolar(H+)-ATPase (V-ATPase), a multisubunit enzyme composed of a peripheral complex (V1) that hydrolyzes ATP and a membrane integral complex (V0) that translocates protons. V-ATPase is responsible for acidifying and maintaining the pH of intracellular compartments and in some cell types, is targeted to the plasma membrane, where it is responsible for acidifying the extracellular environment. In renal intercalated cells, can partially compensate the lack of ATP6V1B1 and mediate secretion of protons (H+) into the urine under base-line conditions but not in conditions of acid load. The polypeptide is V-type proton ATPase subunit B, brain isoform (ATP6V1B2) (Bos taurus (Bovine)).